The following is a 1068-amino-acid chain: TSC22 domain family protein 1 (1068 aa).

The required for interaction with TGFBR1 and promotion of TGF-beta signaling stretch occupies residues 1-98 (MHQPPESTAA…SQAQLQAQPL (98 aa)). Disordered stretches follow at residues 23 to 110 (AHPA…KKSG), 125 to 288 (ISSN…SPAS), and 602 to 623 (YSQAAPPVQTPLPGAPPPQQLQ). Low complexity predominate over residues 36–55 (GSASALNAAGTGVGSSATSS). Over residues 58-70 (FPPPSLLQPPPPA) the composition is skewed to pro residues. Positions 84–100 (SLNLLSQAQLQAQPLAP) are enriched in low complexity. Over residues 133 to 142 (EDTESYDDLD) the composition is skewed to acidic residues. A compositionally biased stretch (basic residues) spans 216 to 240 (HPHHLHHHHHIHHGHHLQHGHHHPS). The span at 241-250 (HVAVASASIP) shows a compositional bias: low complexity. Residues 261 to 271 (KLSTTGSSDSI) show a composition bias toward polar residues. The residue at position 263 (Ser263) is a Phosphoserine. Residues 272–288 (TPVAPTSAVSSSGSPAS) show a composition bias toward low complexity. The span at 609–620 (VQTPLPGAPPPQ) shows a compositional bias: pro residues. The tract at residues 1000–1021 (VLKEQIKELIEKNSQLEQENNL) is leucine-zipper. The disordered stretch occupies residues 1032 to 1068 (AQFQAQLQTGSPPATTQPQGTTQPPAQPASQGSGPTA). Residues 1039–1068 (QTGSPPATTQPQGTTQPPAQPASQGSGPTA) are compositionally biased toward low complexity.

This sequence belongs to the TSC-22/Dip/Bun family. In terms of assembly, forms homodimers. Forms heterodimers. Component of a complex composed of TSC22D1 (via N-terminus), TGFBR1 and TGFBR2; the interaction between TSC22D1 and TGFBR1 is inhibited by SMAD7 and promoted by TGFB1. Interacts with SMAD7; the interaction requires TGF-beta and the interaction is inhibited by TGFBR1. Interacts with TPT1/fortilin; interaction results in the destabilization of TSC22D1 protein and prevents TSC22D1-mediated apoptosis. Interacts with SMAD4 (via N-terminus). Interacts with ACVRL1/ALK1, ACVR1/ALK2, BMPR1A/ALK3, ACVR1B/ALK4, BMPR1B/ALK6, ACVR2A/ACTRII, and BMPR2. Interacts with SMAD6. Interacts with TFE3; the interaction is enhanced in the presence of TGF-beta. As to quaternary structure, forms a heterodimer with TSC22D4/THG1. Forms a heterodimer with TSC22D4/THG1. Interacts with histone H1-2. Interacts with GNL3.

It localises to the cytoplasm. Its subcellular location is the nucleus. The protein localises to the cell membrane. The protein resides in the mitochondrion. In terms of biological role, transcriptional repressor. Acts on the C-type natriuretic peptide (CNP) promoter. Acts to promote CASP3-mediated apoptosis. Positively regulates TGF-beta signaling by interacting with SMAD7 which inhibits binding of SMAD7 to TGFBR1, preventing recruitment of SMURF ubiquitin ligases to TGFBR1 and inhibiting SMURF-mediated ubiquitination and degradation of TGFBR1. Contributes to enhancement of TGF-beta signaling by binding to and modulating the transcription activator activity of SMAD4. Promotes TGF-beta-induced transcription of COL1A2; via its interaction with TFE3 at E-boxes in the gene proximal promoter. Plays a role in the repression of hematopoietic precursor cell growth. Promotes IL2 deprivation-induced apoptosis in T-lymphocytes, via repression of TSC22D3/GILZ transcription and activation of the caspase cascade. Its function is as follows. May act to negatively regulate TGFB3 signaling and thereby inhibit cell death in mammary gland cells. Positively regulates cell death in response to TGFB3 during mammary gland involution. This chain is TSC22 domain family protein 1, found in Macaca fascicularis (Crab-eating macaque).